Consider the following 427-residue polypeptide: Trigger factor (427 aa).

Residues 163–248 (GNIAIIDFKG…VKGIKVKELP (86 aa)) enclose the PPIase FKBP-type domain.

The protein belongs to the FKBP-type PPIase family. Tig subfamily.

The protein resides in the cytoplasm. It carries out the reaction [protein]-peptidylproline (omega=180) = [protein]-peptidylproline (omega=0). Functionally, involved in protein export. Acts as a chaperone by maintaining the newly synthesized protein in an open conformation. Functions as a peptidyl-prolyl cis-trans isomerase. The protein is Trigger factor of Clostridium botulinum (strain Alaska E43 / Type E3).